A 419-amino-acid chain; its full sequence is Sulfate adenylyltransferase (419 aa).

The protein belongs to the sulfate adenylyltransferase family.

The catalysed reaction is sulfate + ATP + H(+) = adenosine 5'-phosphosulfate + diphosphate. Its pathway is sulfur metabolism; hydrogen sulfide biosynthesis; sulfite from sulfate: step 1/3. The polypeptide is Sulfate adenylyltransferase (Psychrobacter sp. (strain PRwf-1)).